Consider the following 693-residue polypeptide: Translation factor GUF1 homolog, chloroplastic (693 aa).

Residues 1–51 constitute a chloroplast transit peptide; it reads MATDLSSSSTLLLSRNCKTPPFYHTTNSLSLSKTHHLYASRNAVVSRLRLL. The tr-type G domain maps to 86–267; that stretch reads SNIRNFCIIA…AIVERIPSPR (182 aa). GTP contacts are provided by residues 95-102, 160-164, and 214-217; these read AHIDHGKS, DTPGH, and NKID.

Belongs to the TRAFAC class translation factor GTPase superfamily. Classic translation factor GTPase family. LepA subfamily.

It localises to the plastid. Its subcellular location is the chloroplast. It carries out the reaction GTP + H2O = GDP + phosphate + H(+). Functionally, promotes chloroplast protein synthesis. May act as a fidelity factor of the translation reaction, by catalyzing a one-codon backward translocation of tRNAs on improperly translocated ribosomes. This Ricinus communis (Castor bean) protein is Translation factor GUF1 homolog, chloroplastic.